Reading from the N-terminus, the 448-residue chain is Putative vacuolar cation/proton exchanger 6 (448 aa).

At 31–81 (MGLVNEVELKSLLEQETDSPQTNAASLMEQGSLRERRAKAPRNSVVQSFKI) the chain is on the cytoplasmic side. A helical transmembrane segment spans residues 82–102 (VILSNKLNLLLPFGPLAILVH). Residues 103–109 (YLTDNKG) are Extracellular-facing. The chain crosses the membrane as a helical span at residues 110-130 (WFFLLSLVGITPLAERLGYAT). Residues 131–141 (EQLSCYTGATV) are Cytoplasmic-facing. The chain crosses the membrane as a helical span at residues 142-162 (GGLLNATFGNVIELIISIIAL). Residues 150–185 (GNVIELIISIIALKNGMIRVVQLTLLGSILSNILLV) form a cation selection region. The Extracellular portion of the chain corresponds to 163 to 178 (KNGMIRVVQLTLLGSI). A helical membrane pass occupies residues 179-199 (LSNILLVLGCAFFCGGLVFPG). The Cytoplasmic segment spans residues 200–209 (KDQVFDKRNA). The helical transmembrane segment at 210 to 230 (VVSSGMLLMAVMGLLFPTFLH) threads the bilayer. The Extracellular segment spans residues 231–243 (YTHSEVHAGSSEL). Residues 244 to 264 (ALSRFISCIMLVAYAAYLFFQ) form a helical membrane-spanning segment. At 265-295 (LKSQPSFYTEKTNQNEETSNDDEDPEISKWE) the chain is on the cytoplasmic side. Residues 296 to 316 (AIIWLSIFTAWVSLLSGYLVD) form a helical membrane-spanning segment. Topologically, residues 317 to 334 (AIEGTSVSWKIPISFISV) are extracellular. A helical membrane pass occupies residues 335–355 (ILLPIVGNAAEHAGAIMFAMK). A cation selection region spans residues 341–376 (GNAAEHAGAIMFAMKDKLDLSLGVAIGSSIQISMFA). The Cytoplasmic portion of the chain corresponds to 356 to 363 (DKLDLSLG). Residues 364-384 (VAIGSSIQISMFAVPFCVVIG) traverse the membrane as a helical segment. Over 385-393 (WMMGAQMDL) the chain is Extracellular. The helical transmembrane segment at 394–414 (NLQLFETATLLITVIVVAFFL) threads the bilayer. Over 415 to 425 (QLEGTSNYFKR) the chain is Cytoplasmic. Residues 426-446 (LMLILCYLIVAASFFVHEDPH) traverse the membrane as a helical segment. The Extracellular portion of the chain corresponds to 447–448 (QG).

The protein belongs to the Ca(2+):cation antiporter (CaCA) (TC 2.A.19) family. Cation/proton exchanger (CAX) subfamily.

The protein localises to the vacuole membrane. Functionally, vacuolar cation/proton exchanger (CAX). Translocates Ca(2+) and other metal ions into vacuoles using the proton gradient formed by H(+)-ATPase and H(+)-pyrophosphatase. The polypeptide is Putative vacuolar cation/proton exchanger 6 (CAX6) (Arabidopsis thaliana (Mouse-ear cress)).